Here is a 1603-residue protein sequence, read N- to C-terminus: Gag-Pol polyprotein (1603 aa).

Over residues 124–141 (KGEEVGETTAQRDAKMAP) the composition is skewed to basic and acidic residues. The tract at residues 124–144 (KGEEVGETTAQRDAKMAPEKM) is disordered. Residues 172–175 (PPPY) carry the PPXY motif motif. Residues 180-184 (LYPSL) carry the LYPX(n)L motif motif. The short motif at 219-229 (LTDWARIREEL) is the Nuclear export signal element. CCHC-type zinc fingers lie at residues 507-524 (GLCY…QCPK) and 533-550 (ERCQ…QCRR). The segment at 544-571 (NAKQCRRRDGNQGQRPGKGLSSGSWPVS) is disordered. A Peptidase A2 domain is found at 609-690 (ITALLDSGAD…VRGSILGRDC (82 aa)). Catalysis depends on D614, which acts as the For protease activity; shared with dimeric partner. Positions 750–938 (LQLGHIEPSL…PGVQYLGYKL (189 aa)) constitute a Reverse transcriptase domain. Residues D815, D890, D891, D1158, E1192, D1213, and D1272 each contribute to the Mg(2+) site. One can recognise an RNase H type-1 domain in the interval 1149-1280 (PVPGPTAFTD…ADSQATFQAY (132 aa)). The Integrase-type zinc-finger motif lies at 1280 to 1321 (YPLREAKDLHTALHIGPRALSKACNISMQQAREVVQTCPHCN). 4 residues coordinate Zn(2+): H1289, H1293, C1317, and C1320. Residues 1333-1496 (RGLGPLQIWQ…TPIQKHWRPT (164 aa)) enclose the Integrase catalytic domain. The Mg(2+) site is built by D1344, D1401, and E1437. The integrase-type DNA-binding region spans 1502-1550 (PPVKIRIETGEWEKGWNVLVWGRGYAAVKNRDTDKVIWVPSRKVKPDVT). An involved in homooctamerization region spans residues 1548-1567 (DVTQKDEVTKKDEASPLFAG). Residues 1566 to 1603 (AGISDWIPWEDEQEGLQGETASNKQERPGEDTLAANES) form a disordered region.

In terms of assembly, active as a homodimer. As to quaternary structure, homodimer. Homomultimer. Homohexamer. Homodimer; further associates as a homooctamer. In terms of assembly, heterodimer of alpha and beta subunits. Three forms of RT exist: alpha-alpha (alpha-Pol), beta-beta (beta-Pol), and alpha-beta, with the major form being the heterodimer. Both the polymerase and RNase H active sites are located in the alpha subunit of heterodimeric RT alpha-beta. Mg(2+) serves as cofactor. The cofactor is Mn(2+). In terms of processing, specific enzymatic cleavages in vivo yield mature proteins. Post-translationally, capsid protein p27: The cleavage at the C-terminus is slowly trimmed by the viral protease, sometimes being cut internally thereby generating the short version of the capsid protein and a capsid protein C-terminally extended by 3 amino acids in a ratio of 2:1.

The protein localises to the virion. It catalyses the reaction DNA(n) + a 2'-deoxyribonucleoside 5'-triphosphate = DNA(n+1) + diphosphate. It carries out the reaction Endonucleolytic cleavage to 5'-phosphomonoester.. Its function is as follows. Capsid protein p27: Self-associates to form the irregular polyhedron core composed of hexamers and pentamers, that encapsulates the genomic RNA-nucleocapsid complex. Assembles as a tube in vitro. Binds to inositol hexakisphosphate (IP6), which allows the assembly of the polyhedral capsid. Spacer peptide: Plays a role in the oligomerization of the Gag polyprotein and in the stabilization of the immature particle. Essential layering element during tube assembly. Functionally, binds strongly to viral nucleic acids and promotes their packaging. Plays a role in the maturation-stabilization of the viral dimeric RNA via highly structured zinc-binding motifs. In terms of biological role, the aspartyl protease that mediates proteolytic cleavages of Gag and Gag-Pol polyproteins during or shortly after the release of the virion from the plasma membrane. Cleavages take place as an ordered, step-wise cascade to yield mature proteins. This process is called maturation. Displays maximal activity during the budding process just prior to particle release from the cell. Its function is as follows. Catalyzes viral DNA integration into the host chromosome, by performing a series of DNA cutting and joining reactions. This recombination event is an essential step in the viral replication cycle. Has a strong preference for using the 3'-OH at the viral DNA end as a nucleophile. The sequence is that of Gag-Pol polyprotein (gag-pol) from Avian leukosis virus subgroup A (isolate RSA) (ALV-A RSA).